We begin with the raw amino-acid sequence, 317 residues long: uncharacterized protein (317 aa).

6 helical membrane-spanning segments follow: residues 14–34, 72–92, 119–139, 196–216, 230–250, and 291–307; these read IPLLSNDLISMLSGGVAATVS, LIGFFRGNGTNCLRAFPYGAV, LLFGAIAGAASCATTYPLDIA, TLLNVVPYVSICFFTFEFCKQ, LFLGGFTGIIGQTLTFPADVL, and SNMLKIIPVMSITWYTY. Solcar repeat units follow at residues 18 to 103, 113 to 217, and 224 to 313; these read SNDL…LKQR, LENH…CKQK, and LTAF…VSKM.

Belongs to the mitochondrial carrier (TC 2.A.29) family.

It localises to the mitochondrion inner membrane. This is an uncharacterized protein from Schizosaccharomyces pombe (strain 972 / ATCC 24843) (Fission yeast).